The chain runs to 296 residues: Transcription factor MYB72 (296 aa).

2 HTH myb-type domains span residues 11–63 and 64–118; these read KNKV…INYL and RPDV…KKRL. 2 DNA-binding regions (H-T-H motif) span residues 39 to 63 and 91 to 114; these read WRSL…INYL and WSKI…NTHL. Residues 118–144 form a disordered region; sequence LTPSSSSSSLSSTHDQSTKADHDKNCD. Over residues 133 to 144 the composition is skewed to basic and acidic residues; it reads QSTKADHDKNCD.

As to quaternary structure, interacts with EIL3.

The protein resides in the nucleus. Involved in metal ions homeostasis, including iron ions (Fe) acquisition, via the regulation of NAS4 and NAS2 genes expression. Necessary for plant survival in alkaline soil where iron availability is greatly restricted. Involved in the up-regulation of several biosynthesis genes of secondary metabolites involved in iron uptake under conditions of iron deficiency. Triggers tolerance to nickel (Ni) and zinc (Zn) ions. Required in the roots during early signaling steps of rhizobacteria-mediated (e.g. P.fluorescens WCS417r) and beneficial fungi-mediated (e.g. T.asperellum T34) broad-spectrum induced systemic resistance (ISR) against several pathogens (e.g. P.syringae pv tomato, H.parasitica, P.cucumerina, A.brassicicola and B.cinerea) and implying enhanced callose deposition. Required for the induction of some genes (e.g. BGLU42) upon rhizobacteria-mediated ISR. The chain is Transcription factor MYB72 from Arabidopsis thaliana (Mouse-ear cress).